A 447-amino-acid chain; its full sequence is Exodeoxyribonuclease 7 large subunit (447 aa).

This sequence belongs to the XseA family. As to quaternary structure, heterooligomer composed of large and small subunits.

The protein localises to the cytoplasm. The enzyme catalyses Exonucleolytic cleavage in either 5'- to 3'- or 3'- to 5'-direction to yield nucleoside 5'-phosphates.. Bidirectionally degrades single-stranded DNA into large acid-insoluble oligonucleotides, which are then degraded further into small acid-soluble oligonucleotides. This is Exodeoxyribonuclease 7 large subunit from Exiguobacterium sibiricum (strain DSM 17290 / CCUG 55495 / CIP 109462 / JCM 13490 / 255-15).